The following is a 220-amino-acid chain: Aspartic protease inhibitor 8 (220 aa).

The N-terminal stretch at 1–23 (MMKCLFLLCLCLLPIVVFSSTFT) is a signal peptide. Positions 24 to 32 (SQNLIDLPS) are excised as a propeptide. 2 cysteine pairs are disulfide-bonded: C80/C125 and C174/C185.

This sequence belongs to the protease inhibitor I3 (leguminous Kunitz-type inhibitor) family.

Its subcellular location is the vacuole. Its function is as follows. Inhibitor of cathepsin D (aspartic protease) and trypsin (serine protease). May protect the plant by inhibiting proteases of invading organisms. This chain is Aspartic protease inhibitor 8, found in Solanum tuberosum (Potato).